An 882-amino-acid polypeptide reads, in one-letter code: Alanine--tRNA ligase (882 aa).

Zn(2+) contacts are provided by His563, His567, Cys665, and His669.

The protein belongs to the class-II aminoacyl-tRNA synthetase family. Zn(2+) serves as cofactor.

It localises to the cytoplasm. The enzyme catalyses tRNA(Ala) + L-alanine + ATP = L-alanyl-tRNA(Ala) + AMP + diphosphate. In terms of biological role, catalyzes the attachment of alanine to tRNA(Ala) in a two-step reaction: alanine is first activated by ATP to form Ala-AMP and then transferred to the acceptor end of tRNA(Ala). Also edits incorrectly charged Ser-tRNA(Ala) and Gly-tRNA(Ala) via its editing domain. This chain is Alanine--tRNA ligase, found in Synechococcus sp. (strain RCC307).